The sequence spans 435 residues: uncharacterized protein (435 aa).

Transmembrane regions (helical) follow at residues I9–A29, V57–M77, T110–M130, A146–V166, V176–T196, L226–P246, V280–M300, W321–T341, A343–V363, I367–F387, and F408–L428.

This sequence belongs to the YiaN/YgiK family.

The protein localises to the cell inner membrane. This is an uncharacterized protein from Salmonella typhimurium (strain LT2 / SGSC1412 / ATCC 700720).